Here is an 85-residue protein sequence, read N- to C-terminus: Large ribosomal subunit protein bL27 (85 aa).

The interval 1–20 is disordered; that stretch reads MAHKKGASSSRNGRDSNAQR. A compositionally biased stretch (polar residues) spans 7-19; sequence ASSSRNGRDSNAQ.

It belongs to the bacterial ribosomal protein bL27 family.

In Kineococcus radiotolerans (strain ATCC BAA-149 / DSM 14245 / SRS30216), this protein is Large ribosomal subunit protein bL27.